Reading from the N-terminus, the 215-residue chain is N-(5'-phosphoribosyl)anthranilate isomerase (215 aa).

Belongs to the TrpF family.

It carries out the reaction N-(5-phospho-beta-D-ribosyl)anthranilate = 1-(2-carboxyphenylamino)-1-deoxy-D-ribulose 5-phosphate. The protein operates within amino-acid biosynthesis; L-tryptophan biosynthesis; L-tryptophan from chorismate: step 3/5. The protein is N-(5'-phosphoribosyl)anthranilate isomerase of Parvibaculum lavamentivorans (strain DS-1 / DSM 13023 / NCIMB 13966).